Here is a 225-residue protein sequence, read N- to C-terminus: Sugar fermentation stimulation protein homolog (225 aa).

Belongs to the SfsA family.

The polypeptide is Sugar fermentation stimulation protein homolog (Sulfolobus acidocaldarius (strain ATCC 33909 / DSM 639 / JCM 8929 / NBRC 15157 / NCIMB 11770)).